The sequence spans 259 residues: Imidazole glycerol phosphate synthase subunit HisF (259 aa).

Active-site residues include Asp-11 and Asp-130.

It belongs to the HisA/HisF family. As to quaternary structure, heterodimer of HisH and HisF.

The protein localises to the cytoplasm. It carries out the reaction 5-[(5-phospho-1-deoxy-D-ribulos-1-ylimino)methylamino]-1-(5-phospho-beta-D-ribosyl)imidazole-4-carboxamide + L-glutamine = D-erythro-1-(imidazol-4-yl)glycerol 3-phosphate + 5-amino-1-(5-phospho-beta-D-ribosyl)imidazole-4-carboxamide + L-glutamate + H(+). The protein operates within amino-acid biosynthesis; L-histidine biosynthesis; L-histidine from 5-phospho-alpha-D-ribose 1-diphosphate: step 5/9. In terms of biological role, IGPS catalyzes the conversion of PRFAR and glutamine to IGP, AICAR and glutamate. The HisF subunit catalyzes the cyclization activity that produces IGP and AICAR from PRFAR using the ammonia provided by the HisH subunit. The sequence is that of Imidazole glycerol phosphate synthase subunit HisF from Polaromonas naphthalenivorans (strain CJ2).